A 327-amino-acid chain; its full sequence is Plastid lipid-associated protein 1, chloroplastic (327 aa).

Residues 1–84 constitute a chloroplast transit peptide; it reads MATTVPLFSQ…WGPEIGLNSS (84 aa). The interval 56–78 is disordered; sequence VNDEWGPDSKGRGGDVDDEWGPE. Positions 85 to 107 form a coiled coil; that stretch reads VAEKVAEEAIESAEETERLKRVL.

The protein belongs to the PAP/fibrillin family. Expressed in anthers, sepals seeds, fruit coats, and leaves. Very low in petals and pistils and not detected in roots.

It is found in the plastid. The protein resides in the chloroplast. In terms of biological role, may modulate the action of carotenoids. The sequence is that of Plastid lipid-associated protein 1, chloroplastic (PAP1) from Brassica campestris (Field mustard).